Reading from the N-terminus, the 387-residue chain is MEQERIRQLAKLLAAGARARDAQAESMMDGGVAAAPAPAGQTLDVVEQALSTPPDDVDETQWRAAREQLLTHAHNGLVKLQRGDLQLDADEGCAMEAVIISDGSRPSFLLCDGEIDPKDPSIETWAGNIAAAQALGIAKLAAAVGRIQPKNGHASRYVGTGTLIDRDAGLILTNYHVIEQAQQNYGVAMTRNGDRLSVDGWLEIDFVGESCSLRTHRFRIVEVALPQGYGSTFHGIDAAVARIEPLPDSPALPDPVPLLSADAAYATGAISSLALIGFPARPSLQDGKDVDWSFVMRVLFGNRFGVKRLAPGQFTLPLGSHALDQGRRAIGHDATTFGGASGSLLMSWLDDRTPSFALHFGGATGVSNYALSFAAERNALSAIGARF.

It belongs to the peptidase S1 family.

Functionally, possibly a dedicated protease for substrate gasdermin bGSDM; cleaves the bGSDM precursor, releasing the pore-forming moiety, which integrates into the membrane and triggers cell death. Involved in defense against bacteriophages. When this probable 4 gene operon (bGSDM-FE772_23060-FE772_23065-FE772_23070) is inserted into E.coli it provides nearly 100-fold protection against phages T5 and T6 and about 8-fold against phage T4. The operon without bGSDM no longer protects against phage. This Lysobacter enzymogenes protein is Probable serine protease FE772_23060.